Consider the following 230-residue polypeptide: Ribosomal RNA small subunit methyltransferase G (230 aa).

Residues Gly-95, Phe-100, 146–147 (GE), and Arg-159 contribute to the S-adenosyl-L-methionine site.

The protein belongs to the methyltransferase superfamily. RNA methyltransferase RsmG family.

The protein resides in the cytoplasm. In terms of biological role, specifically methylates the N7 position of a guanine in 16S rRNA. In Parabacteroides distasonis (strain ATCC 8503 / DSM 20701 / CIP 104284 / JCM 5825 / NCTC 11152), this protein is Ribosomal RNA small subunit methyltransferase G.